The sequence spans 118 residues: MARLAVAIAVVAAVVVVLAATTSEAAISCGQVSSAIALCLSYARGQGFAPSAGCCSGVRSLNSAARTTADRRAACNCLKNAARGISGLNAGNAASIPSKCGVSVPYTISTSTDCSRVS.

Positions 1 to 20 (MARLAVAIAVVAAVVVVLAA) are cleaved as a signal peptide. 4 disulfide bridges follow: cysteine 29/cysteine 77, cysteine 39/cysteine 54, cysteine 55/cysteine 100, and cysteine 75/cysteine 114.

Belongs to the plant LTP family.

Functionally, plant non-specific lipid-transfer proteins transfer phospholipids as well as galactolipids across membranes. May play a role in wax or cutin deposition in the cell walls of expanding epidermal cells and certain secretory tissues. In Sorghum bicolor (Sorghum), this protein is Non-specific lipid-transfer protein 1 (LTP1).